Reading from the N-terminus, the 388-residue chain is Flap endonuclease 1 (388 aa).

Residues 1–104 form an N-domain region; the sequence is MGILGLSKLI…GELAKRAERR (104 aa). D34 lines the Mg(2+) pocket. R47 and R70 together coordinate DNA. The Mg(2+) site is built by D86, E158, E160, D179, and D181. The interval 122 to 253 is I-domain; that stretch reads EIEKFNRRLV…KRAIELINSY (132 aa). E158 lines the DNA pocket. Residues G231 and D233 each coordinate DNA. D233 provides a ligand contact to Mg(2+). An interaction with PCNA region spans residues 336-344; sequence TQVRLDSFF. A disordered region spans residues 355–388; sequence AAAKRKAEEAKKSANNKKAKIGGGGGAGRGRRPK.

Belongs to the XPG/RAD2 endonuclease family. FEN1 subfamily. As to quaternary structure, interacts with PCNA. Three molecules of FEN1 bind to one PCNA trimer with each molecule binding to one PCNA monomer. PCNA stimulates the nuclease activity without altering cleavage specificity. It depends on Mg(2+) as a cofactor. In terms of processing, phosphorylated. Phosphorylation upon DNA damage induces relocalization to the nuclear plasma.

It is found in the nucleus. The protein resides in the nucleolus. Its subcellular location is the nucleoplasm. The protein localises to the mitochondrion. Its function is as follows. Structure-specific nuclease with 5'-flap endonuclease and 5'-3' exonuclease activities involved in DNA replication and repair. During DNA replication, cleaves the 5'-overhanging flap structure that is generated by displacement synthesis when DNA polymerase encounters the 5'-end of a downstream Okazaki fragment. It enters the flap from the 5'-end and then tracks to cleave the flap base, leaving a nick for ligation. Also involved in the long patch base excision repair (LP-BER) pathway, by cleaving within the apurinic/apyrimidinic (AP) site-terminated flap. Acts as a genome stabilization factor that prevents flaps from equilibrating into structures that lead to duplications and deletions. Also possesses 5'-3' exonuclease activity on nicked or gapped double-stranded DNA, and exhibits RNase H activity. Also involved in replication and repair of rDNA and in repairing mitochondrial DNA. This is Flap endonuclease 1 from Drosophila willistoni (Fruit fly).